Reading from the N-terminus, the 286-residue chain is Puff II/9-2 protein (286 aa).

Positions 1-19 are cleaved as a signal peptide; that stretch reads MKQFIVLTVVLLAIQELQG. Residues 61-235 form a helical region; sequence IDGLKKENNI…EKDLNTLRCE (175 aa). Asn156 is a glycosylation site (N-linked (GlcNAc...) asparagine).

This Bradysia coprophila (Dark-winged fungus gnat) protein is Puff II/9-2 protein (II/9-2).